The following is a 137-amino-acid chain: Proline-rich protein 13 (137 aa).

Disordered regions lie at residues 26–54 (PPPL…PCRP) and 94–137 (VGPG…SDSD). Residues 103–124 (KTRKKMKKAHKKSHKHHKHGKH) are compositionally biased toward basic residues. Over residues 125–137 (SSSSSSSSSSDSD) the composition is skewed to low complexity.

The protein localises to the nucleus. Negatively regulates TSP1 expression at the level of transcription. This down-regulation was shown to reduce taxane-induced apoptosis. In Mus musculus (Mouse), this protein is Proline-rich protein 13 (Prr13).